The following is a 218-amino-acid chain: Thiopurine S-methyltransferase (218 aa).

Residues W10, L45, E66, and R123 each contribute to the S-adenosyl-L-methionine site.

It belongs to the class I-like SAM-binding methyltransferase superfamily. TPMT family.

The protein resides in the cytoplasm. It catalyses the reaction S-adenosyl-L-methionine + a thiopurine = S-adenosyl-L-homocysteine + a thiopurine S-methylether.. This Shewanella putrefaciens (strain CN-32 / ATCC BAA-453) protein is Thiopurine S-methyltransferase.